The following is a 500-amino-acid chain: Protein nucleotidyltransferase YdiU (500 aa).

Residues Gly96, Gly98, Arg99, Lys119, Asp131, Gly132, Arg182, and Arg189 each coordinate ATP. Catalysis depends on Asp258, which acts as the Proton acceptor. Positions 259 and 268 each coordinate Mg(2+). Asp268 contributes to the ATP binding site.

Belongs to the SELO family. Requires Mg(2+) as cofactor. It depends on Mn(2+) as a cofactor.

It carries out the reaction L-seryl-[protein] + ATP = 3-O-(5'-adenylyl)-L-seryl-[protein] + diphosphate. It catalyses the reaction L-threonyl-[protein] + ATP = 3-O-(5'-adenylyl)-L-threonyl-[protein] + diphosphate. The enzyme catalyses L-tyrosyl-[protein] + ATP = O-(5'-adenylyl)-L-tyrosyl-[protein] + diphosphate. The catalysed reaction is L-histidyl-[protein] + UTP = N(tele)-(5'-uridylyl)-L-histidyl-[protein] + diphosphate. It carries out the reaction L-seryl-[protein] + UTP = O-(5'-uridylyl)-L-seryl-[protein] + diphosphate. It catalyses the reaction L-tyrosyl-[protein] + UTP = O-(5'-uridylyl)-L-tyrosyl-[protein] + diphosphate. Nucleotidyltransferase involved in the post-translational modification of proteins. It can catalyze the addition of adenosine monophosphate (AMP) or uridine monophosphate (UMP) to a protein, resulting in modifications known as AMPylation and UMPylation. In Rhizobium etli (strain CIAT 652), this protein is Protein nucleotidyltransferase YdiU.